Here is a 471-residue protein sequence, read N- to C-terminus: Mitochondrial distribution and morphology protein 10 (471 aa).

Disordered regions lie at residues 272-291 (TEMPSSSSSTSSTTTTSNHG), 374-394 (ADTPGVPPVEPPSTHNRDEEN), and 436-455 (SWAANSTAAGGGQSVGGGVS). Positions 276–288 (SSSSSTSSTTTTS) are enriched in low complexity. Residues 444–455 (AGGGQSVGGGVS) are compositionally biased toward gly residues.

It belongs to the MDM10 family. As to quaternary structure, component of the ER-mitochondria encounter structure (ERMES) or MDM complex, composed of mmm1, mdm10, mdm12 and mdm34. Associates with the mitochondrial outer membrane sorting assembly machinery SAM(core) complex.

It localises to the mitochondrion outer membrane. Its function is as follows. Component of the ERMES/MDM complex, which serves as a molecular tether to connect the endoplasmic reticulum and mitochondria. Components of this complex are involved in the control of mitochondrial shape and protein biogenesis and may function in phospholipid exchange. mdm10 is involved in the late assembly steps of the general translocase of the mitochondrial outer membrane (TOM complex). Functions in the tom40-specific route of the assembly of outer membrane beta-barrel proteins, including the association of tom40 with the receptor tom22 and small TOM proteins. Can associate with the SAM(core) complex as well as the mdm12-mmm1 complex, both involved in late steps of the major beta-barrel assembly pathway, that is responsible for biogenesis of all outer membrane beta-barrel proteins. May act as a switch that shuttles between both complexes and channels precursor proteins into the tom40-specific pathway. Plays a role in mitochondrial morphology and in the inheritance of mitochondria. This chain is Mitochondrial distribution and morphology protein 10 (mdmB), found in Neosartorya fischeri (strain ATCC 1020 / DSM 3700 / CBS 544.65 / FGSC A1164 / JCM 1740 / NRRL 181 / WB 181) (Aspergillus fischerianus).